The following is a 1185-amino-acid chain: 205 kDa microtubule-associated protein (1185 aa).

Over residues 146–159 the composition is skewed to low complexity; that stretch reads EPNQLPEQLQQQQQ. The interval 146–196 is disordered; that stretch reads EPNQLPEQLQQQQQIESQGVHEDPRQEDEDEHSSVATTYGTSSLSENNSSP. Residues 179 to 196 are compositionally biased toward polar residues; the sequence is SVATTYGTSSLSENNSSP. Phosphoserine occurs at positions 354 and 448. At Tyr450 the chain carries Phosphotyrosine. A phosphoserine mark is found at Ser709, Ser710, and Ser712. Thr721 bears the Phosphothreonine mark. Ser728 bears the Phosphoserine mark. The tract at residues 745-977 is microtubule-binding; sequence TAADGQSISQ…ASTKVRPAAT (233 aa). Low complexity predominate over residues 856 to 866; it reads SIATKTSTTSS. Disordered regions lie at residues 856-1035 and 1054-1114; these read SIAT…TSTA and SASL…SSPA. 2 stretches are compositionally biased toward polar residues: residues 867–881 and 908–936; these read LTGN…NVGS and TITN…STNA. Ser874 bears the Phosphoserine mark. A compositionally biased stretch (low complexity) spans 940 to 952; the sequence is ATSGTGSVASSTA. Residues 989 to 999 are compositionally biased toward polar residues; that stretch reads PRSTISSTTTV. Over residues 1003–1015 the composition is skewed to low complexity; sequence PSTSTPSFSTRSP. Composition is skewed to polar residues over residues 1016 to 1026 and 1054 to 1066; these read NKQQSNGLGKN and SASL…STSR. Ser1075 and Ser1086 each carry phosphoserine. Residues 1100 to 1111 are compositionally biased toward polar residues; it reads LTPQSKDGTAKS. Ser1121 bears the Phosphoserine mark.

It is found in the cytoplasm. Its subcellular location is the cytoskeleton. The protein resides in the spindle. Functionally, may play an important role in the regulation of microtubule assembly and interaction. This is 205 kDa microtubule-associated protein (Map205) from Drosophila melanogaster (Fruit fly).